The primary structure comprises 79 residues: Conotoxin ArMSGL-0124 (79 aa).

Residues 1–20 form the signal peptide; it reads MSRLGIMVLTLLLLVYMATS. A propeptide spanning residues 21–44 is cleaved from the precursor; sequence HQDAGEKQATQRDAINFRWKRSLT. 3 cysteine pairs are disulfide-bonded: Cys-52–Cys-64, Cys-56–Cys-73, and Cys-63–Cys-77. Residue Leu-78 is modified to Leucine amide.

Belongs to the conotoxin O3 superfamily. Expressed by the venom duct.

The protein resides in the secreted. This is Conotoxin ArMSGL-0124 from Conus arenatus (Sand-dusted cone).